Consider the following 332-residue polypeptide: Lipoyl synthase (332 aa).

Residues Cys79, Cys84, Cys90, Cys105, Cys109, Cys112, and Ser319 each contribute to the [4Fe-4S] cluster site. Residues 91–308 enclose the Radical SAM core domain; it reads FSHGTATFMI…ADYGYEIGFK (218 aa).

Belongs to the radical SAM superfamily. Lipoyl synthase family. [4Fe-4S] cluster serves as cofactor.

The protein localises to the cytoplasm. It carries out the reaction [[Fe-S] cluster scaffold protein carrying a second [4Fe-4S](2+) cluster] + N(6)-octanoyl-L-lysyl-[protein] + 2 oxidized [2Fe-2S]-[ferredoxin] + 2 S-adenosyl-L-methionine + 4 H(+) = [[Fe-S] cluster scaffold protein] + N(6)-[(R)-dihydrolipoyl]-L-lysyl-[protein] + 4 Fe(3+) + 2 hydrogen sulfide + 2 5'-deoxyadenosine + 2 L-methionine + 2 reduced [2Fe-2S]-[ferredoxin]. The protein operates within protein modification; protein lipoylation via endogenous pathway; protein N(6)-(lipoyl)lysine from octanoyl-[acyl-carrier-protein]: step 2/2. In terms of biological role, catalyzes the radical-mediated insertion of two sulfur atoms into the C-6 and C-8 positions of the octanoyl moiety bound to the lipoyl domains of lipoate-dependent enzymes, thereby converting the octanoylated domains into lipoylated derivatives. This is Lipoyl synthase from Hahella chejuensis (strain KCTC 2396).